The following is a 275-amino-acid chain: Large ribosomal subunit protein uL2 (275 aa).

The segment at 210 to 275 (GRNRHRGIRP…DKLIISRKKK (66 aa)) is disordered. The segment covering 257–275 (FKTRKKKASDKLIISRKKK) has biased composition (basic residues).

It belongs to the universal ribosomal protein uL2 family. Part of the 50S ribosomal subunit. Forms a bridge to the 30S subunit in the 70S ribosome.

One of the primary rRNA binding proteins. Required for association of the 30S and 50S subunits to form the 70S ribosome, for tRNA binding and peptide bond formation. It has been suggested to have peptidyltransferase activity; this is somewhat controversial. Makes several contacts with the 16S rRNA in the 70S ribosome. This is Large ribosomal subunit protein uL2 from Helicobacter hepaticus (strain ATCC 51449 / 3B1).